The following is a 79-amino-acid chain: MESIMARFVRHRKFCRFTAEKCINIDYKDLVTIQHSIIESGKIIPSRITGTRARYQRQLARAIKRARYLSLLPYTDHHQ.

This sequence belongs to the bacterial ribosomal protein bS18 family. In terms of assembly, part of the 30S ribosomal subunit. Forms a tight heterodimer with protein bS6.

Binds as a heterodimer with protein bS6 to the central domain of the 16S rRNA, where it helps stabilize the platform of the 30S subunit. This Blochmanniella pennsylvanica (strain BPEN) protein is Small ribosomal subunit protein bS18.